The chain runs to 410 residues: Metacaspase-1 (410 aa).

The tract at residues 1 to 94 is disordered; that stretch reads MFPGSGRQTY…RQSGAMNDVS (94 aa). Composition is skewed to low complexity over residues 21–47 and 55–64; these read APQY…YNGP and NYNYGHYGPP. Residues 65 to 75 are compositionally biased toward gly residues; sequence QGQGQGYGQGG. The span at 80–94 shows a compositional bias: polar residues; the sequence is MYNNNRQSGAMNDVS. Catalysis depends on residues His200 and Cys256.

Belongs to the peptidase C14B family.

Functionally, involved in cell death (apoptosis). The chain is Metacaspase-1 (MCA1) from Meyerozyma guilliermondii (strain ATCC 6260 / CBS 566 / DSM 6381 / JCM 1539 / NBRC 10279 / NRRL Y-324) (Yeast).